The sequence spans 279 residues: Inorganic pyrophosphatase (279 aa).

Residue Arg100 participates in diphosphate binding. The Mg(2+) site is built by Asp132, Asp137, and Asp169.

The protein belongs to the PPase family. Mg(2+) is required as a cofactor.

It catalyses the reaction diphosphate + H2O = 2 phosphate + H(+). This chain is Inorganic pyrophosphatase (ppa1), found in Dictyostelium discoideum (Social amoeba).